Here is a 973-residue protein sequence, read N- to C-terminus: UvrABC system protein A (973 aa).

ATP is bound at residue 34 to 41 (GLSGSGKS). 2 consecutive ABC transporter domains span residues 330–609 (WAKS…PNSI) and 629–958 (AKKN…QFLK). 662 to 669 (GVSGGGKS) contributes to the ATP binding site. A C4-type zinc finger spans residues 761-787 (CEACQGDGVIKIEMHFLPDVYVTCDVC).

The protein belongs to the ABC transporter superfamily. UvrA family. In terms of assembly, forms a heterotetramer with UvrB during the search for lesions.

It is found in the cytoplasm. In terms of biological role, the UvrABC repair system catalyzes the recognition and processing of DNA lesions. UvrA is an ATPase and a DNA-binding protein. A damage recognition complex composed of 2 UvrA and 2 UvrB subunits scans DNA for abnormalities. When the presence of a lesion has been verified by UvrB, the UvrA molecules dissociate. This chain is UvrABC system protein A, found in Mesorhizobium japonicum (strain LMG 29417 / CECT 9101 / MAFF 303099) (Mesorhizobium loti (strain MAFF 303099)).